Consider the following 30-residue polypeptide: Trypsin inhibitor 1 (30 aa).

Cystine bridges form between Cys4–Cys21, Cys11–Cys23, and Cys17–Cys29.

This sequence belongs to the protease inhibitor I7 (squash-type serine protease inhibitor) family.

The protein resides in the secreted. Its function is as follows. Inhibits trypsin. The sequence is that of Trypsin inhibitor 1 from Momordica charantia (Bitter gourd).